The sequence spans 132 residues: Translation initiation factor 5A (132 aa).

A Hypusine modification is found at Lys-36.

This sequence belongs to the eIF-5A family.

The protein localises to the cytoplasm. Functions by promoting the formation of the first peptide bond. This is Translation initiation factor 5A (eIF5A) from Caldivirga maquilingensis (strain ATCC 700844 / DSM 13496 / JCM 10307 / IC-167).